Reading from the N-terminus, the 368-residue chain is UDP-galactose/UDP-N-acetylglucosamine transporter srf-3 (368 aa).

8 helical membrane-spanning segments follow: residues 72 to 92 (FVSTVAVWLTEVIKCFICLFL), 118 to 138 (LKVCIPAMIYIVQNNLFYVAA), 145 to 165 (TFMITSQLKIFTAAIFTVIIL), 174 to 194 (WFALAVLFVGVSLVQLQGTKA), 203 to 223 (FVGFVAVVVACCLSGFAGIYF), 235 to 254 (LWMRNVQMAVFSIPASFSAI), 273 to 293 (SIVWLTVLWYGVGGLSVAVCI), and 317 to 337 (IFLFDFIPSFTFLLGASLVIF).

Belongs to the nucleotide-sugar transporter family. SLC35A subfamily. As to expression, expressed exclusively in pharyngeal cells g1 and g2, lateral seam cells, spermatheca and vas deferens.

The protein localises to the golgi apparatus membrane. Acts as a transporter of both UDP-galactose and UDP-N-acetylglucosamine into the Golgi lumen. Apparently transports UDP-galactose and UDP-N-acetylglucosamine simultaneously, and independently, by an unknown mechanism. Functions redundantly with nucleotide sugar transporter nstp-4. May be involved in gonadal development. The sequence is that of UDP-galactose/UDP-N-acetylglucosamine transporter srf-3 (srf-3) from Caenorhabditis elegans.